Here is a 446-residue protein sequence, read N- to C-terminus: Baeyer-Villiger monooxygenase dmxR6 (446 aa).

The protein belongs to the AflY oxidoreductase family.

It functions in the pathway secondary metabolite biosynthesis. Functionally, baeyer-Villiger monooxygenase; part of the gene cluster that mediates the biosynthesis of the dimeric xanthones cryptosporioptides. The pathway begins with the synthesis of atrochrysone thioester by the polyketide synthase dmx-nrPKS. The atrochrysone carboxyl ACP thioesterase dmxR1 then breaks the thioester bond and releases the atrochrysone carboxylic acid from dmx-nrPKS. Atrochrysone carboxylic acid is decarboxylated by the decarboxylase dmxR15, and oxidized by the anthrone oxygenase dmxR16 to yield emodin. Emodin is then reduced to emodin hydroquinone by the oxidoreductase dmxR7. A-ring reduction by the short chain dehydrogenase dmxR18, dehydration by the scytalone dehydratase-like protein dmxR17 and probable spontaneous re-oxidation, results in overall deoxygenation to chrysophanol. Baeyer-Villiger oxidation by the Baeyer-Villiger monooxygenase (BVMO) dmxR6 then yields monodictylactone in equilibrium with monodictyphenone. In the case of the cryptosporioptides biosynthesis, monodictylactone is reduced at C-12 to an alcohol (by the short chain dehydrogenases dmxR12 or dmxR8) and hydroxylated at C-5 by dmxR9, yielding the electron-rich aromatic which could eliminate H(2)O to form the ortho-quinonemethide, followed by tautomerisation to paraquinone and complete the formal reduction to produce the 10-methylgroup. Conjugate addition of C-4a-OH to the resulting paraquinone by the monooxygenase dmxR10 then gives cyclohexadienone, which is then reduced at C-5 by the short chain dehydrogenase dmxR3 to give the dihydroxanthone. The 6,7-epoxide in the cryptosporioptides could be introduced by the cytochrome P450 monooxygenase dmxL3. The highly reducing PKS dmxL2 manufactures butyrate, which is further carboxylated by dmxL1 to form ethylmalonate. It is not yet clear whether the carboxylation occurs while the butyrate is attached to the ACP of dmxL2, but this unusual fungal metabolite could then be esterified to O-5 by the O-acetyltransferase dmxR13. Finally, dimerization performed by dmxR5 gives the observed dimers cryptosporioptides A, B and C as the final products of the pathway. The polypeptide is Baeyer-Villiger monooxygenase dmxR6 (Cryptosporiopsis sp. (strain 8999)).